The chain runs to 371 residues: MLRSAGRVAAVALLALFALGCVSAAAKPSTDRLVAAIKSKNLSAVVDALSVKGLDVNTPDSTRRLPLVEAARSRDARLVGALLDQGALARVSDGTTTPLHLSMQGGSAAIVKLLLAHGADPNAKDKTGASARSTAAAVKELADLLKQWDARGAMAFEDEPGAWIREERDGQSYYWKPANGESRWAVPPSCAWQRVTVQGHPIKYINSLTGQETTRVPPALAWARVTAADGSALWLNWASRVASAAATAPAELPAELAAELAMHPNRRWYNTATREYVYTDPAYATPWRELVDEASGAPFFFNVETGDTTWELPAALAWTEVIESSSGADGESGSGSEAGPRYFHNTVSGEVAWSAPEGSRHVFVEASAADL.

An N-terminal signal peptide occupies residues 1 to 24 (MLRSAGRVAAVALLALFALGCVSA). A glycan (N-linked (GlcNAc...) asparagine) is linked at asparagine 41. ANK repeat units lie at residues 62 to 91 (TRRLPLVEAARSRDARLVGALLDQGALARV) and 94 to 123 (GTTTPLHLSMQGGSAAIVKLLLAHGADPNA). WW domains are found at residues 159-187 (EPGAWIREERDGQSYYWKPANGESRWAVP) and 283-313 (YATPWRELVDEASGAPFFFNVETGDTTWELP).

It is found in the endoplasmic reticulum lumen. May have a role in the remodeling of the endoplasmic reticulum upon zygote formation. This Chlamydomonas reinhardtii (Chlamydomonas smithii) protein is Zygote-specific protein 3 (ZYS3).